A 386-amino-acid chain; its full sequence is MLLDRLKADLAELDTRALRRTRRSLATPCAPHARVDGRDMLAFCSNDYLGLAANPALTRALQTGAVHWGAGCGASHLVSGHYAVHDELEARLAAFVDCERALYFSTGYMANTGTIPALVGRGDAIFADRLNHASLVDGALLSRAELHRYAHGDPAALERALAASSARRKLIVTDAVFSMDGDVAPLATLLELAERFDAWLMVDDAHGFGVLGPGGRGAVAEAGLASWRLIYVGTLGKAAGVSGAFVAGHADVVEWLMQKARTYIFTTGAPPALAETLLASLELIERGDERREHLVGLVALLRRELTLARWQLLPSRTPIQPVLIGDNAEALAVARALWDEGLWVPAIRPPTVPHGTARLRISLTAAHCADDVRRLAQALNRLEAQR.

Residue Arg-20 participates in substrate binding. Residue 107 to 108 (GY) participates in pyridoxal 5'-phosphate binding. His-132 is a substrate binding site. Pyridoxal 5'-phosphate-binding residues include Ser-178, His-206, and Thr-234. N6-(pyridoxal phosphate)lysine is present on Lys-237. Residue Thr-351 coordinates substrate.

Belongs to the class-II pyridoxal-phosphate-dependent aminotransferase family. BioF subfamily. In terms of assembly, homodimer. Pyridoxal 5'-phosphate is required as a cofactor.

It carries out the reaction 6-carboxyhexanoyl-[ACP] + L-alanine + H(+) = (8S)-8-amino-7-oxononanoate + holo-[ACP] + CO2. The protein operates within cofactor biosynthesis; biotin biosynthesis. Its function is as follows. Catalyzes the decarboxylative condensation of pimeloyl-[acyl-carrier protein] and L-alanine to produce 8-amino-7-oxononanoate (AON), [acyl-carrier protein], and carbon dioxide. This Aromatoleum aromaticum (strain DSM 19018 / LMG 30748 / EbN1) (Azoarcus sp. (strain EbN1)) protein is 8-amino-7-oxononanoate synthase.